A 258-amino-acid polypeptide reads, in one-letter code: UPF0328 protein ECU07_0060 (258 aa).

The protein belongs to the UPF0328 family.

The polypeptide is UPF0328 protein ECU07_0060 (Encephalitozoon cuniculi (strain GB-M1) (Microsporidian parasite)).